Reading from the N-terminus, the 471-residue chain is Chromosomal replication initiator protein DnaA (471 aa).

The interval 1 to 91 (MVDVSETTER…KYWQDESDAV (91 aa)) is domain I, interacts with DnaA modulators. A domain II region spans residues 91–133 (VYSVDICVSDGVGVQPQMAEHPDGAVDGPPVVMVGGTYDHLSS). Residues 134–352 (PLDPRFTFDN…GALNKVVAHS (219 aa)) form a domain III, AAA+ region region. Gly180, Gly182, Lys183, and Thr184 together coordinate ATP. The interval 353–471 (SLVGRSVTIE…DINLLIRMLR (119 aa)) is domain IV, binds dsDNA.

This sequence belongs to the DnaA family. Oligomerizes as a right-handed, spiral filament on DNA at oriC.

Its subcellular location is the cytoplasm. In terms of biological role, plays an essential role in the initiation and regulation of chromosomal replication. ATP-DnaA binds to the origin of replication (oriC) to initiate formation of the DNA replication initiation complex once per cell cycle. Binds the DnaA box (a 9 base pair repeat at the origin) and separates the double-stranded (ds)DNA. Forms a right-handed helical filament on oriC DNA; dsDNA binds to the exterior of the filament while single-stranded (ss)DNA is stabiized in the filament's interior. The ATP-DnaA-oriC complex binds and stabilizes one strand of the AT-rich DNA unwinding element (DUE), permitting loading of DNA polymerase. After initiation quickly degrades to an ADP-DnaA complex that is not apt for DNA replication. Binds acidic phospholipids. In Anaplasma marginale (strain St. Maries), this protein is Chromosomal replication initiator protein DnaA.